We begin with the raw amino-acid sequence, 119 residues long: Outer membrane protein assembly factor BamE (119 aa).

A signal peptide spans 1–19 (MQFTKWFIALPLAVTALSG). Cys-20 carries the N-palmitoyl cysteine lipid modification. Cys-20 is lipidated: S-diacylglycerol cysteine.

It belongs to the BamE family. In terms of assembly, part of the Bam complex.

The protein localises to the cell outer membrane. Its function is as follows. Part of the outer membrane protein assembly complex, which is involved in assembly and insertion of beta-barrel proteins into the outer membrane. This Vibrio cholerae serotype O1 (strain ATCC 39541 / Classical Ogawa 395 / O395) protein is Outer membrane protein assembly factor BamE.